Here is a 102-residue protein sequence, read N- to C-terminus: Nuclear protein 2 (102 aa).

Disordered stretches follow at residues 1–26 and 46–102; these read MDPPTRPSVSGPRTRARPPPPEALPT and PASG…TRLA. The span at 85-102 shows a compositional bias: basic residues; that stretch reads QRKRRQRQLQPRPRTRLA.

It belongs to the NUPR family.

The protein localises to the nucleus. In terms of biological role, acts as a transcriptional repressor by inhibiting gene expression at the NUPR1 promoter in a p53/TP53-dependent manner in cancer cells. Involved in the G1 cell cycle arrest, and in a decrease in cell viability and cell proliferation of pancreatic cancer cells. Plays a role as a negative regulator of the protumoral factor NUPR1. The chain is Nuclear protein 2 from Mus musculus (Mouse).